A 261-amino-acid polypeptide reads, in one-letter code: Hydrolase in agr operon (261 aa).

Residues 1-239 (MKVQIYQLPI…ADILTVDLNL (239 aa)) form the CN hydrolase domain. Catalysis depends on Glu-41, which acts as the Proton acceptor. Lys-110 (proton donor) is an active-site residue. Cys-146 acts as the Nucleophile in catalysis.

This sequence belongs to the carbon-nitrogen hydrolase superfamily. NIT1/NIT2 family.

In Staphylococcus aureus, this protein is Hydrolase in agr operon.